Here is a 142-residue protein sequence, read N- to C-terminus: Large ribosomal subunit protein uL13 (142 aa).

The protein belongs to the universal ribosomal protein uL13 family. Part of the 50S ribosomal subunit.

Functionally, this protein is one of the early assembly proteins of the 50S ribosomal subunit, although it is not seen to bind rRNA by itself. It is important during the early stages of 50S assembly. This chain is Large ribosomal subunit protein uL13, found in Chromobacterium violaceum (strain ATCC 12472 / DSM 30191 / JCM 1249 / CCUG 213 / NBRC 12614 / NCIMB 9131 / NCTC 9757 / MK).